The sequence spans 818 residues: LisH domain-containing protein ARMC9 (818 aa).

The region spanning 7–39 (HESELLGLVKEYLDFAEFEDTLKTFSKECKIKG) is the LisH domain. Residues 204–230 (QSNKEILQQLHQQLVEAERRSVTYLKR) are a coiled coil. S582 carries the post-translational modification Phosphoserine. Disordered stretches follow at residues 642 to 755 (VQWS…TTRE) and 790 to 818 (SSCGPQQASRPGSTASSTRGLPSSQSHRK). Residues 701–711 (STPESCVSSSS) show a composition bias toward low complexity. Residues 792-818 (CGPQQASRPGSTASSTRGLPSSQSHRK) show a composition bias toward polar residues.

As to quaternary structure, interacts with TOGARAM1, CCDC66, CEP104, CSPP1 and CEP290. Interacts with NDUFAF2. In terms of tissue distribution, strongly expressed in most melanomas and melanocytes. Weakly expressed in the testis.

Its subcellular location is the cytoplasm. The protein localises to the cytoskeleton. It is found in the cilium basal body. The protein resides in the cell projection. It localises to the cilium. Its subcellular location is the microtubule organizing center. The protein localises to the centrosome. It is found in the centriole. Involved in ciliogenesis. It is required for appropriate acetylation and polyglutamylation of ciliary microtubules, and regulation of cilium length. Acts as a positive regulator of hedgehog (Hh)signaling. May participate in the trafficking and/or retention of GLI2 and GLI3 proteins at the ciliary tip. The polypeptide is LisH domain-containing protein ARMC9 (Homo sapiens (Human)).